The chain runs to 436 residues: Adenylosuccinate synthetase (436 aa).

GTP is bound by residues 13–19 and 41–43; these read GDEGKGK and GHT. The active-site Proton acceptor is the D14. 2 residues coordinate Mg(2+): D14 and G41. IMP contacts are provided by residues 14–17, 39–42, T131, R145, Q226, T241, and R309; these read DEGK and NAGH. The active-site Proton donor is the H42. A substrate-binding site is contributed by 305–311; that stretch reads TVTGRKR. Residues R311, 337–339, and 419–421 each bind GTP; these read KLD and STG.

Belongs to the adenylosuccinate synthetase family. In terms of assembly, homodimer. It depends on Mg(2+) as a cofactor.

The protein resides in the cytoplasm. The enzyme catalyses IMP + L-aspartate + GTP = N(6)-(1,2-dicarboxyethyl)-AMP + GDP + phosphate + 2 H(+). Its pathway is purine metabolism; AMP biosynthesis via de novo pathway; AMP from IMP: step 1/2. In terms of biological role, plays an important role in the de novo pathway of purine nucleotide biosynthesis. Catalyzes the first committed step in the biosynthesis of AMP from IMP. The protein is Adenylosuccinate synthetase of Aromatoleum aromaticum (strain DSM 19018 / LMG 30748 / EbN1) (Azoarcus sp. (strain EbN1)).